Here is a 492-residue protein sequence, read N- to C-terminus: uncharacterized protein (492 aa).

The protein belongs to the FGGY kinase family.

This is an uncharacterized protein from Escherichia coli (strain K12).